The primary structure comprises 198 residues: Phage-like element PBSX protein XkdA (198 aa).

It to B.subtilis YqaB.

The polypeptide is Phage-like element PBSX protein XkdA (xkdA) (Bacillus subtilis (strain 168)).